The sequence spans 444 residues: Phosphoglucosamine mutase (444 aa).

Ser-102 functions as the Phosphoserine intermediate in the catalytic mechanism. Mg(2+)-binding residues include Ser-102, Asp-241, Asp-243, and Asp-245. Ser-102 is modified (phosphoserine).

The protein belongs to the phosphohexose mutase family. Requires Mg(2+) as cofactor. Activated by phosphorylation.

It carries out the reaction alpha-D-glucosamine 1-phosphate = D-glucosamine 6-phosphate. Its function is as follows. Catalyzes the conversion of glucosamine-6-phosphate to glucosamine-1-phosphate. This Histophilus somni (strain 129Pt) (Haemophilus somnus) protein is Phosphoglucosamine mutase.